We begin with the raw amino-acid sequence, 248 residues long: tRNA pseudouridine synthase A (248 aa).

Asp52 functions as the Nucleophile in the catalytic mechanism. Substrate is bound at residue Tyr113.

This sequence belongs to the tRNA pseudouridine synthase TruA family. In terms of assembly, homodimer.

The catalysed reaction is uridine(38/39/40) in tRNA = pseudouridine(38/39/40) in tRNA. Formation of pseudouridine at positions 38, 39 and 40 in the anticodon stem and loop of transfer RNAs. This Mesorhizobium japonicum (strain LMG 29417 / CECT 9101 / MAFF 303099) (Mesorhizobium loti (strain MAFF 303099)) protein is tRNA pseudouridine synthase A.